The sequence spans 565 residues: Putative serine protease pcp-1 (565 aa).

Positions 1–17 (MRWFLVLLLVALVSVEA) are cleaved as a signal peptide. 3 N-linked (GlcNAc...) asparagine glycosylation sites follow: asparagine 69, asparagine 107, and asparagine 126. Serine 177 (charge relay system) is an active-site residue. N-linked (GlcNAc...) asparagine glycosylation is found at asparagine 240, asparagine 244, asparagine 257, asparagine 271, asparagine 319, and asparagine 347. Residues aspartate 451 and histidine 479 each act as charge relay system in the active site.

The protein belongs to the peptidase S28 family.

The protein is Putative serine protease pcp-1 (pcp-1) of Caenorhabditis elegans.